We begin with the raw amino-acid sequence, 157 residues long: Ubiquitin-like protein 4A (157 aa).

A Ubiquitin-like domain is found at 1 to 76 (MQLTVKALQG…LNLVVKPLEK (76 aa)). Residue Lys-48 forms a Glycyl lysine isopeptide (Lys-Gly) (interchain with G-Cter in ubiquitin) linkage. Ser-90 is subject to Phosphoserine. Positions 96–138 (WQLISKVLARHFSAADASRVLEQLQRDYERSLSRLTLDDIERL) are required and sufficient for interaction with BAG6.

In terms of assembly, component of the BAG6/BAT3 complex, at least composed of BAG6, UBL4A and GET4/TRC35. Interacts with BAG6; the interaction is direct and required for UBL4A protein stability. Interacts with USP13; may be indirect via BAG6. Post-translationally, polyubiquitinated. Ubiquitination by AMFR and deubiquitination by USP13 may regulate the interaction between the BAG6/BAT3 complex and SGTA and therefore may regulate client proteins fate.

It is found in the cytoplasm. It localises to the cytosol. Its subcellular location is the nucleus. As part of a cytosolic protein quality control complex, the BAG6/BAT3 complex, maintains misfolded and hydrophobic patches-containing proteins in a soluble state and participates in their proper delivery to the endoplasmic reticulum or alternatively can promote their sorting to the proteasome where they undergo degradation. The BAG6/BAT3 complex is involved in the post-translational delivery of tail-anchored/type II transmembrane proteins to the endoplasmic reticulum membrane. Recruited to ribosomes, it interacts with the transmembrane region of newly synthesized tail-anchored proteins and together with SGTA and ASNA1 mediates their delivery to the endoplasmic reticulum. Client proteins that cannot be properly delivered to the endoplasmic reticulum are ubiquitinated and sorted to the proteasome. Similarly, the BAG6/BAT3 complex also functions as a sorting platform for proteins of the secretory pathway that are mislocalized to the cytosol either delivering them to the proteasome for degradation or to the endoplasmic reticulum. The BAG6/BAT3 complex also plays a role in the endoplasmic reticulum-associated degradation (ERAD), a quality control mechanism that eliminates unwanted proteins of the endoplasmic reticulum through their retrotranslocation to the cytosol and their targeting to the proteasome. It maintains these retrotranslocated proteins in an unfolded yet soluble state condition in the cytosol to ensure their proper delivery to the proteasome. The polypeptide is Ubiquitin-like protein 4A (Homo sapiens (Human)).